We begin with the raw amino-acid sequence, 725 residues long: MAPFGGKSLADVVSGIGGNGVGGALAAVAAALLVRLFAGPGIALLPEDEAEDDYAETEDGGGDSIRPVTIRWRNITCSLSDKSSKSVRFLLKNVSGEAKPGRLLAIMGPSGSGKTTLLNVLAGQLSLSPRLHLSGLLEVNGKPSSSKAYKLAFVRQEDLFFSQLTVRETLSFAAELQLPEISSAEERDEYVNNLLLKLGLVSCADSCVGDAKVRGISGGEKKRLSLACELIASPSVIFADEPTTGLDAFQAEKVMETLQKLAQDGHTVICSIHQPRGSVYAKFDDIVLLTEGTLVYAGPAGKEPLTYFGNFGFLCPEHVNPAEFLADLISVDYSSSETVYSSQKRVHALVDAFSQRSSSVLYATPLSMKEETKNGMRPRRKAIVERTDGWWRQFFLLLKRAWMQASRDGPTNKVRARMSVASAVIFGSVFWRMGKSQTSIQDRMGLLQVAAINTAMAALTKTVGVFPKERAIVDRERSKGSYSLGPYLLSKTIAEIPIGAAFPLMFGAVLYPMARLNPTLSRFGKFCGIVTVESFAASAMGLTVGAMVPSTEAAMAVGPSLMTVFIVFGGYYVNADNTPIIFRWIPRASLIRWAFQGLCINEFSGLKFDHQNTFDVQTGEQALERLSFGGRRIRETIAAQSRILMFWYSATYLLLEKNKPKYQKLELLVDNGETGNSGVQLDKAEVDQTEKPEDDDINQPLDDQNQTSDSDDELDEIRPFVLEGL.

Residues 12-34 (VVSGIGGNGVGGALAAVAAALLV) form a helical membrane-spanning segment. The region spanning 70–316 (IRWRNITCSL…YFGNFGFLCP (247 aa)) is the ABC transporter domain. 108 to 115 (GPSGSGKT) is an ATP binding site. The ABC transmembrane type-2 domain maps to 392-603 (RQFFLLLKRA…AFQGLCINEF (212 aa)). 4 helical membrane-spanning segments follow: residues 446–466 (LLQV…VGVF), 493–513 (IAEI…LYPM), 528–548 (GIVT…GAMV), and 553–573 (AAMA…GYYV). The disordered stretch occupies residues 676-725 (NSGVQLDKAEVDQTEKPEDDDINQPLDDQNQTSDSDDELDEIRPFVLEGL). Residues 682–691 (DKAEVDQTEK) show a composition bias toward basic and acidic residues.

The protein belongs to the ABC transporter superfamily. ABCG family. Eye pigment precursor importer (TC 3.A.1.204) subfamily.

The protein localises to the membrane. The sequence is that of ABC transporter G family member 7 (ABCG7) from Arabidopsis thaliana (Mouse-ear cress).